The following is a 299-amino-acid chain: Protein N-terminal and lysine N-methyltransferase EFM7 (299 aa).

S-adenosyl-L-methionine is bound by residues W74, 100-102 (GAG), D122, W155, and S178.

Belongs to the class I-like SAM-binding methyltransferase superfamily. EFM7 family.

Its subcellular location is the cytoplasm. In terms of biological role, S-adenosyl-L-methionine-dependent protein methyltransferase that trimethylates the N-terminal glycine 'Gly-2' of elongation factor 1-alpha, before also catalyzing the mono- and dimethylation of 'Lys-3'. The chain is Protein N-terminal and lysine N-methyltransferase EFM7 from Cryptococcus neoformans var. neoformans serotype D (strain B-3501A) (Filobasidiella neoformans).